The primary structure comprises 2939 residues: Serine/threonine-protein kinase tel1 (2939 aa).

Disordered regions lie at residues 193–212, 695–718, and 859–886; these read GTSV…RAGS, PPED…AADS, and KTRR…ETRK. Positions 697–715 are enriched in basic and acidic residues; the sequence is EDSHKATSTDQPKREEIRA. The region spanning 1869-2471 is the FAT domain; that stretch reads IAAAAATRCG…MYQIWSGVKA (603 aa). Residues 2577-2890 enclose the PI3K/PI4K catalytic domain; sequence FEPQMSIASG…DKKSTKNLNE (314 aa). The segment at 2583–2589 is G-loop; that stretch reads IASGVSA. Residues 2755–2763 are catalytic loop; sequence GLGDRHGHN. An activation loop region spans residues 2775 to 2799; sequence HIDLGVAFELGRILPVPELVPFRLT. The tract at residues 2869–2894 is disordered; sequence DVVEAEDERRAGDKKSTKNLNEPSEA. Positions 2875 to 2884 are enriched in basic and acidic residues; sequence DERRAGDKKS. Residues 2907 to 2939 enclose the FATC domain; the sequence is KTLSVMATVNDLINQATDERNLAVLFCGWAAYA.

It belongs to the PI3/PI4-kinase family. ATM subfamily. As to quaternary structure, associates with DNA double-strand breaks.

The protein localises to the nucleus. It is found in the chromosome. Its subcellular location is the telomere. It carries out the reaction L-seryl-[protein] + ATP = O-phospho-L-seryl-[protein] + ADP + H(+). It catalyses the reaction L-threonyl-[protein] + ATP = O-phospho-L-threonyl-[protein] + ADP + H(+). Serine/threonine protein kinase which activates checkpoint signaling upon genotoxic stresses such as ionizing radiation (IR), ultraviolet light (UV), or DNA replication stalling, thereby acting as a DNA damage sensor. Recognizes the substrate consensus sequence [ST]-Q. Phosphorylates histone H2A to form H2AS128ph (gamma-H2A) at sites of DNA damage, involved in the regulation of DNA damage response mechanism. Required for the control of telomere length and genome stability. The polypeptide is Serine/threonine-protein kinase tel1 (mus-21) (Neurospora crassa (strain ATCC 24698 / 74-OR23-1A / CBS 708.71 / DSM 1257 / FGSC 987)).